An 89-amino-acid chain; its full sequence is Small ribosomal subunit protein uS17 (89 aa).

This sequence belongs to the universal ribosomal protein uS17 family. As to quaternary structure, part of the 30S ribosomal subunit.

Its function is as follows. One of the primary rRNA binding proteins, it binds specifically to the 5'-end of 16S ribosomal RNA. The polypeptide is Small ribosomal subunit protein uS17 (Ralstonia nicotianae (strain ATCC BAA-1114 / GMI1000) (Ralstonia solanacearum)).